The primary structure comprises 409 residues: Elongation factor Tu (409 aa).

The tr-type G domain maps to 10–214 (KPHVNVGTIG…AVDNYIPTPE (205 aa)). Residues 19-26 (GHVDHGKT) form a G1 region. 19–26 (GHVDHGKT) contacts GTP. Thr-26 is a Mg(2+) binding site. Residues 60–64 (GITIN) form a G2 region. The G3 stretch occupies residues 81 to 84 (DCPG). Residues 81-85 (DCPGH) and 136-139 (NKVD) each bind GTP. The interval 136–139 (NKVD) is G4. The segment at 174–176 (SGL) is G5.

It belongs to the TRAFAC class translation factor GTPase superfamily. Classic translation factor GTPase family. EF-Tu/EF-1A subfamily. Monomer.

The protein localises to the cytoplasm. It catalyses the reaction GTP + H2O = GDP + phosphate + H(+). Functionally, GTP hydrolase that promotes the GTP-dependent binding of aminoacyl-tRNA to the A-site of ribosomes during protein biosynthesis. This is Elongation factor Tu from Thermosynechococcus vestitus (strain NIES-2133 / IAM M-273 / BP-1).